We begin with the raw amino-acid sequence, 623 residues long: Scarecrow-like protein 22 (623 aa).

2 disordered regions span residues 62 to 90 (RSPS…AAAA) and 179 to 203 (PNPG…QPGS). Positions 63–80 (SPSPFVSSSTTTLSSSHG) are enriched in low complexity. One can recognise a GRAS domain in the interval 235–622 (NDQDQSAVII…KELVTVSAWK (388 aa)). The interval 242 to 311 (VIIDQLFSAA…ALHSLLQDSS (70 aa)) is leucine repeat I (LRI). Positions 330–398 (YRAFSETSPF…SSAPSLKITA (69 aa)) are VHIID. Positions 361–365 (IHIVD) match the VHIID motif. Residues 413-448 (FTEENLRSFAGETGVSFEIELLNMEILLNPTYWPLS) form a leucine repeat II (LRII) region. Residues 458–545 (IAVNLPISSM…RFCVQPSIQK (88 aa)) are PFYRE. The SAW stretch occupies residues 548–622 (TNRYRWMERS…KELVTVSAWK (75 aa)).

The protein belongs to the GRAS family. As to expression, expressed in seedlings, roots, leaves and flowers.

The protein localises to the nucleus. Its function is as follows. Probable transcription factor involved in plant development. This chain is Scarecrow-like protein 22 (SCL22), found in Arabidopsis thaliana (Mouse-ear cress).